Here is a 64-residue protein sequence, read N- to C-terminus: Large ribosomal subunit protein bL28c (64 aa).

The protein belongs to the bacterial ribosomal protein bL28 family.

Its subcellular location is the plastid. It is found in the chloroplast. This Gracilaria tenuistipitata var. liui (Red alga) protein is Large ribosomal subunit protein bL28c.